The chain runs to 274 residues: Glutamate--cysteine ligase regulatory subunit (274 aa).

N6-acetyllysine is present on lysine 263.

The protein belongs to the aldo/keto reductase family. Glutamate--cysteine ligase light chain subfamily. Heterodimer of a catalytic heavy chain and a regulatory light chain. In all tissues examined. Highest levels in skeletal muscle.

Its pathway is sulfur metabolism; glutathione biosynthesis; glutathione from L-cysteine and L-glutamate: step 1/2. The polypeptide is Glutamate--cysteine ligase regulatory subunit (GCLM) (Homo sapiens (Human)).